A 256-amino-acid chain; its full sequence is tRNA (guanine-N(7)-)-methyltransferase (256 aa).

The S-adenosyl-L-methionine site is built by Glu85, Glu110, Asp137, and Asp159. Asp159 is a catalytic residue. Residues Lys163 and Asp195 each contribute to the substrate site.

It belongs to the class I-like SAM-binding methyltransferase superfamily. TrmB family.

The enzyme catalyses guanosine(46) in tRNA + S-adenosyl-L-methionine = N(7)-methylguanosine(46) in tRNA + S-adenosyl-L-homocysteine. It functions in the pathway tRNA modification; N(7)-methylguanine-tRNA biosynthesis. Catalyzes the formation of N(7)-methylguanine at position 46 (m7G46) in tRNA. The protein is tRNA (guanine-N(7)-)-methyltransferase of Rhodopseudomonas palustris (strain BisB5).